A 264-amino-acid chain; its full sequence is Apolipoprotein A-I (264 aa).

The N-terminal stretch at 1-18 (MKAVVLAVAVLFLTGSQA) is a signal peptide. Tandem repeats lie at residues 67–88 (LKLVDNWDTVGTTVGRLQEQLG) and 89–110 (PVTQEFWSNLEKDTDWLREEMN). The segment at 67-264 (LKLVDNWDTV…DETSKRLSTQ (198 aa)) is 10 X approximate tandem repeats. M109 bears the Methionine sulfoxide mark. A 3; half-length repeat occupies 111–121 (KDLEEVKKQVQ). 3 consecutive repeat copies span residues 122–143 (PYLDQFQTKWQEEMEHYRQKVG), 144–165 (PLGAELREGARQKLQDLQERLV), and 166–187 (PVGEDIRDRMRTHVDALRSNLS). One copy of the 7; truncated repeat lies at 188 to 207 (PYSDKMRERLAQHLAKLKDS). M193 bears the Methionine sulfoxide mark. Repeat unit 8 spans residues 208 to 229 (TTLAEYRTKASNHLQTLSEKAK). The 9; half-length repeat unit spans residues 230-240 (PALEDLRQGLT). Residues 241–264 (PMLESFRATIMGWIDETSKRLSTQ) form repeat 10. Methionine sulfoxide is present on M242.

Belongs to the apolipoprotein A1/A4/E family. Homodimer. Interacts with APOA1BP and CLU. Component of a sperm activating protein complex (SPAP), consisting of APOA1, an immunoglobulin heavy chain, an immunoglobulin light chain and albumin. Interacts with NDRG1. Interacts with SCGB3A2. Interacts with NAXE and YJEFN3. In terms of processing, glycosylated. Palmitoylated. Post-translationally, phosphorylation sites are present in the extracellular medium.

It is found in the secreted. In terms of biological role, participates in the reverse transport of cholesterol from tissues to the liver for excretion by promoting cholesterol efflux from tissues and by acting as a cofactor for the lecithin cholesterol acyltransferase (LCAT). As part of the SPAP complex, activates spermatozoa motility. The polypeptide is Apolipoprotein A-I (Apoa1) (Peromyscus maniculatus bairdii (Prairie deer mouse)).